A 480-amino-acid polypeptide reads, in one-letter code: Sulfate adenylyltransferase subunit 1 (480 aa).

In terms of domain architecture, tr-type G spans 30–248 (KGLLRFLTCG…TVDVKKEASK (219 aa)). Positions 39 to 46 (GSVDDGKS) are G1. Residue 39 to 46 (GSVDDGKS) coordinates GTP. Positions 97–101 (GITID) are G2. A G3 region spans residues 118–121 (DTPG). GTP-binding positions include 118–122 (DTPGH) and 173–176 (NKMD). The tract at residues 173–176 (NKMD) is G4. The segment at 211 to 213 (SAL) is G5.

The protein belongs to the TRAFAC class translation factor GTPase superfamily. Classic translation factor GTPase family. CysN/NodQ subfamily. In terms of assembly, heterodimer composed of CysD, the smaller subunit, and CysN.

It carries out the reaction sulfate + ATP + H(+) = adenosine 5'-phosphosulfate + diphosphate. It functions in the pathway sulfur metabolism; hydrogen sulfide biosynthesis; sulfite from sulfate: step 1/3. Its function is as follows. With CysD forms the ATP sulfurylase (ATPS) that catalyzes the adenylation of sulfate producing adenosine 5'-phosphosulfate (APS) and diphosphate, the first enzymatic step in sulfur assimilation pathway. APS synthesis involves the formation of a high-energy phosphoric-sulfuric acid anhydride bond driven by GTP hydrolysis by CysN coupled to ATP hydrolysis by CysD. The chain is Sulfate adenylyltransferase subunit 1 from Photorhabdus laumondii subsp. laumondii (strain DSM 15139 / CIP 105565 / TT01) (Photorhabdus luminescens subsp. laumondii).